A 255-amino-acid polypeptide reads, in one-letter code: Aquaporin TIP4-1 (255 aa).

A run of 2 helical transmembrane segments spans residues 25-45 and 61-81; these read AVLAELVLTFLFVFTGVSAAM and TLAAVAIAHALAAGVLVTAGF. An NPA 1 motif is present at residues 89-91; sequence NPA. The next 3 helical transmembrane spans lie at 108-128, 148-168, and 176-196; these read VLYVAAQLLASSAACVLLRFL, GLVMEVILTFSLLFVTYAMIL, and AIGPLLTGLIVGANSLAGGNF. Residues 202 to 204 carry the NPA 2 motif; the sequence is NPA. The helical transmembrane segment at 223–243 threads the bilayer; sequence WIGPLLGGPLAGFVYESLFLV.

The protein belongs to the MIP/aquaporin (TC 1.A.8) family. TIP (TC 1.A.8.10) subfamily.

It is found in the vacuole membrane. Functionally, aquaporins facilitate the transport of water and small neutral solutes across cell membranes. This chain is Aquaporin TIP4-1 (TIP4-1), found in Zea mays (Maize).